The primary structure comprises 645 residues: DNA ligase (645 aa).

NAD(+) is bound by residues 30 to 34 and 72 to 73; these read DAEFD and SQ. Lysine 99 acts as the N6-AMP-lysine intermediate in catalysis. Residues arginine 120, glutamate 163, lysine 275, and lysine 296 each coordinate NAD(+). Cysteine 387, cysteine 390, cysteine 403, and cysteine 408 together coordinate Zn(2+). In terms of domain architecture, BRCT spans 564-645; sequence EEGAVLKGLS…EAFLNLIGKV (82 aa).

The protein belongs to the NAD-dependent DNA ligase family. LigA subfamily. It depends on Mg(2+) as a cofactor. Mn(2+) is required as a cofactor.

It catalyses the reaction NAD(+) + (deoxyribonucleotide)n-3'-hydroxyl + 5'-phospho-(deoxyribonucleotide)m = (deoxyribonucleotide)n+m + AMP + beta-nicotinamide D-nucleotide.. Its function is as follows. DNA ligase that catalyzes the formation of phosphodiester linkages between 5'-phosphoryl and 3'-hydroxyl groups in double-stranded DNA using NAD as a coenzyme and as the energy source for the reaction. It is essential for DNA replication and repair of damaged DNA. The sequence is that of DNA ligase from Treponema denticola (strain ATCC 35405 / DSM 14222 / CIP 103919 / JCM 8153 / KCTC 15104).